The chain runs to 22 residues: 50 kDa cell wall protein (22 aa).

It localises to the secreted. It is found in the cell wall. The sequence is that of 50 kDa cell wall protein from Nicotiana tabacum (Common tobacco).